The sequence spans 238 residues: Ribosomal RNA small subunit methyltransferase G (238 aa).

Residues Gly-77, Phe-82, 128 to 129 (AE), and Arg-147 each bind S-adenosyl-L-methionine. The segment at 216 to 238 (RKERSTPKKYPRKPGTPNKQPLS) is disordered.

Belongs to the methyltransferase superfamily. RNA methyltransferase RsmG family.

The protein resides in the cytoplasm. Functionally, specifically methylates the N7 position of guanine in position 535 of 16S rRNA. The polypeptide is Ribosomal RNA small subunit methyltransferase G (Halalkalibacterium halodurans (strain ATCC BAA-125 / DSM 18197 / FERM 7344 / JCM 9153 / C-125) (Bacillus halodurans)).